The following is a 474-amino-acid chain: Trehalose-6-phosphate synthase (474 aa).

Arg10 provides a ligand contact to D-glucose 6-phosphate. 22-23 (GG) is a binding site for UDP-alpha-D-glucose. D-glucose 6-phosphate-binding residues include Tyr77 and Asp131. Residues Arg263 and Lys268 each contribute to the UDP-alpha-D-glucose site. Arg301 contacts D-glucose 6-phosphate. UDP-alpha-D-glucose contacts are provided by residues Phe340 and 366–370 (LVAKE).

The protein belongs to the glycosyltransferase 20 family. Homotetramer.

The enzyme catalyses D-glucose 6-phosphate + UDP-alpha-D-glucose = alpha,alpha-trehalose 6-phosphate + UDP + H(+). It participates in glycan biosynthesis; trehalose biosynthesis. Functionally, probably involved in the osmoprotection via the biosynthesis of trehalose. Catalyzes the transfer of glucose from UDP-alpha-D-glucose (UDP-Glc) to D-glucose 6-phosphate (Glc-6-P) to form trehalose-6-phosphate. Acts with retention of the anomeric configuration of the UDP-sugar donor. This Escherichia coli O9:H4 (strain HS) protein is Trehalose-6-phosphate synthase.